Consider the following 490-residue polypeptide: Protein LMBR1L (490 aa).

Over 1–21 (MEAPDYEVLSVREQLFHERIR) the chain is Extracellular. Positions 1–59 (MEAPDYEVLSVREQLFHERIRECIISTLLFATLYILCHIFLTRFKKPAEFTTVDDEDAT) are interaction with LGB. The tract at residues 1 to 76 (MEAPDYEVLS…LCTFTLAIAL (76 aa)) is LCN1-binding. The helical transmembrane segment at 22 to 42 (ECIISTLLFATLYILCHIFLT) threads the bilayer. Residues 43–66 (RFKKPAEFTTVDDEDATVNKIALE) lie on the Cytoplasmic side of the membrane. The helical transmembrane segment at 67–87 (LCTFTLAIALGAVLLLPFSII) threads the bilayer. The Extracellular portion of the chain corresponds to 88–114 (SNEVLLSLPRNYYIQWLNGSLIHGLWN). The chain crosses the membrane as a helical span at residues 115-135 (LVFLFSNLSLIFLMPFAYFFT). The Cytoplasmic segment spans residues 136–154 (ESEGFAGSRRGVLGRVYET). Residues 155 to 175 (VVMLMLLTLLVLGMVWVASAI) form a helical membrane-spanning segment. Residues 176 to 196 (LDNNKASRESLYDFWEYYLPY) are Extracellular-facing. Residues 197 to 217 (LYSCISFLGVLLLLVCTPLGL) form a helical membrane-spanning segment. Residues 218–305 (ARMFSVTGKL…NLGYPLAMLC (88 aa)) lie on the Cytoplasmic side of the membrane. The chain crosses the membrane as a helical span at residues 306-326 (LLVLTGLSVLIVAIHILELLI). The Extracellular segment spans residues 327 to 350 (DEAAMPRGMQDASLGQVSFSRLGS). A helical transmembrane segment spans residues 351-371 (FGAVIQVALIFYLMVSSVVGF). At 372–388 (YSSPLFRSLRPRWHDTA) the chain is on the cytoplasmic side. The helical transmembrane segment at 389–409 (MTQIIGNCVCLLVLSSALPVF) threads the bilayer. Topologically, residues 410–431 (SRTLGLTRFDLLGDFGRFNWLG) are extracellular. Residues 432–452 (NFYIVFLYNAAFAGLTTLCLV) traverse the membrane as a helical segment. Residues 453 to 490 (KTFTAAVRAELIRAFGLDRLPLPVSGFPPRASRKTQHQ) are Cytoplasmic-facing.

This sequence belongs to the LIMR family. As to quaternary structure, dimer. Can also form higher oligomers. Interacts with LCN1; this interaction mediates the endocytosis of LCN1. Interacts with UBAC2, FAF2, VCP, AMFR, ZNRF3, CTNNB1, LRP6, GSK3A, GSK3B, FZD6, DVL2 and RNF43. Interaction with LGB and SCGB1A1 is controversial.

It is found in the cell membrane. The protein localises to the endoplasmic reticulum membrane. Functionally, plays an essential role in lymphocyte development by negatively regulating the canonical Wnt signaling pathway. In association with UBAC2 and E3 ubiquitin-protein ligase AMFR, promotes the ubiquitin-mediated degradation of CTNNB1 and Wnt receptors FZD6 and LRP6. LMBR1L stabilizes the beta-catenin destruction complex that is required for regulating CTNNB1 levels. Acts as a LCN1 receptor and can mediate its endocytosis. The protein is Protein LMBR1L (LMBR1L) of Pongo abelii (Sumatran orangutan).